The primary structure comprises 514 residues: Probable drug/proton antiporter YHK8 (514 aa).

Topologically, residues 1–74 are cytoplasmic; the sequence is MVAEFQIASA…RHMSTARRYY (74 aa). The chain crosses the membrane as a helical span at residues 75–95; it reads ISSLITFTSMVITMISSSWTL. Topologically, residues 96–111 are extracellular; sequence PSTHIIEHFHISHEVS. The helical transmembrane segment at 112-132 threads the bilayer; that stretch reads TLGITLYVFGLGIGPLFLSPL. Topologically, residues 133-141 are cytoplasmic; that stretch reads SELYGRRIT. A helical transmembrane segment spans residues 142–162; it reads FLYALTLSIIWQCLTIWSKTI. Topologically, residues 163–170 are extracellular; sequence TGVMFGRF. Residues 171-191 traverse the membrane as a helical segment; it reads LSGFFGSAFLSVAGGAIADIF. The Cytoplasmic portion of the chain corresponds to 192 to 200; sequence DKDQIGIPM. The chain crosses the membrane as a helical span at residues 201–221; the sequence is AIYTTSAFLGPSLGPIIGGAL. Topologically, residues 222-227 are extracellular; sequence YHQSYK. The helical transmembrane segment at 228–248 threads the bilayer; sequence WTFITLLITSGCCLVMIIFTI. The Cytoplasmic segment spans residues 249–307; that stretch reads PETYKPMLLIRKAKRLRKEKNDQRYYAVLEVTREQTSLLSAIFLSTKRPFGLLLRDRMM. The chain crosses the membrane as a helical span at residues 308–328; the sequence is GVLCFYTGLELAIIYLYFVAF. The Extracellular segment spans residues 329 to 342; it reads PYVFKKLYNFGPME. The chain crosses the membrane as a helical span at residues 343–363; sequence IACSYIGIMVGMILSAPTCLL. At 364–386 the chain is on the cytoplasmic side; the sequence is FQKTFEWRVKRNNGVKTPEMRFE. A helical membrane pass occupies residues 387 to 407; sequence PLFYGAFLTPVGLFIFAFTCY. Over 408-412 the chain is Extracellular; sequence KHVHW. A helical membrane pass occupies residues 413 to 433; sequence IAPIIGSAIFGSGVYFVFTGV. The Cytoplasmic segment spans residues 434–447; sequence FAYTVDAYRRYAAS. Residues 448–468 form a helical membrane-spanning segment; sequence GMACNTFVRCIMAGVFPLFGL. Over 469 to 477 the chain is Extracellular; sequence QMYKSMGVN. A helical transmembrane segment spans residues 478 to 498; that stretch reads WAGFLLAMVTVAMIPVPFLFT. Over 499-514 the chain is Cytoplasmic; it reads KYGARLRAKSPYAWDD.

The protein belongs to the major facilitator superfamily. CAR1 family.

The protein localises to the membrane. Probable drug/proton antiporter. This Saccharomyces cerevisiae (strain ATCC 204508 / S288c) (Baker's yeast) protein is Probable drug/proton antiporter YHK8 (YHK8).